A 338-amino-acid polypeptide reads, in one-letter code: Mitoferrin-1 (338 aa).

The segment at 1-42 is disordered; sequence MELRSGSVGSQAVARRMDGDSRDGGGGKDATGSEDYENLPTS. Positions 15 to 26 are enriched in basic and acidic residues; it reads RRMDGDSRDGGG. Solcar repeat units follow at residues 43-131, 141-225, and 232-326; these read ASVS…MKRT, NSHL…LQEQ, and YNPQ…FKYF. 6 helical membrane-spanning segments follow: residues 45–64, 106–125, 143–162, 200–219, 234–253, and 301–320; these read VSTHMTAGAMAGILEHSVMY, GVNVMIMGAGPAHAMYFACY, HLANGIAGSMATLLHDAVMN, SYTTQLTMNIPFQSIHFITY, PQSHIISGGLAGALAAAATT, and GIQARVIYQMPSTAISWSVY.

It belongs to the mitochondrial carrier (TC 2.A.29) family. Interacts with ACB10; this interaction stabilizes SLC25A37 and enhances the function of SLC25A37 to import mitochondrial iron during erythroid differentiation.

The protein localises to the mitochondrion inner membrane. It catalyses the reaction Fe(2+)(in) = Fe(2+)(out). Its function is as follows. Mitochondrial iron transporter that specifically mediates iron uptake in developing erythroid cells, thereby playing an essential role in heme biosynthesis. The sequence is that of Mitoferrin-1 (SLC25A37) from Homo sapiens (Human).